The following is a 308-amino-acid chain: Serine/threonine-protein phosphatase PP1 (308 aa).

Mn(2+) contacts are provided by Asp-64, His-66, Asp-92, and Asn-124. Catalysis depends on His-125, which acts as the Proton donor. Mn(2+) contacts are provided by His-173 and His-248.

This sequence belongs to the PPP phosphatase family. PP-1 subfamily. Requires Mn(2+) as cofactor.

It is found in the cytoplasm. It catalyses the reaction O-phospho-L-seryl-[protein] + H2O = L-seryl-[protein] + phosphate. The enzyme catalyses O-phospho-L-threonyl-[protein] + H2O = L-threonyl-[protein] + phosphate. This is Serine/threonine-protein phosphatase PP1 (pph-3) from Neurospora crassa (strain ATCC 24698 / 74-OR23-1A / CBS 708.71 / DSM 1257 / FGSC 987).